A 335-amino-acid polypeptide reads, in one-letter code: Aliphatic sulfonates import ATP-binding protein SsuB (335 aa).

The tract at residues 29–61 (DGDAQDAAVYERDGGAHAPPFASGGAPPDGDRA) is disordered. An ABC transporter domain is found at 74 to 293 (VRLTRVSKRY…ARASAAFAAL (220 aa)). 106–113 (GRSGCGKS) lines the ATP pocket. The segment at 308 to 335 (APAAPNAAGPEGASRGRAAPASGLRWAV) is disordered.

Belongs to the ABC transporter superfamily. Aliphatic sulfonates importer (TC 3.A.1.17.2) family. As to quaternary structure, the complex is composed of two ATP-binding proteins (SsuB), two transmembrane proteins (SsuC) and a solute-binding protein (SsuA).

It is found in the cell inner membrane. The catalysed reaction is ATP + H2O + aliphatic sulfonate-[sulfonate-binding protein]Side 1 = ADP + phosphate + aliphatic sulfonateSide 2 + [sulfonate-binding protein]Side 1.. Functionally, part of the ABC transporter complex SsuABC involved in aliphatic sulfonates import. Responsible for energy coupling to the transport system. This Burkholderia pseudomallei (strain 1710b) protein is Aliphatic sulfonates import ATP-binding protein SsuB.